A 476-amino-acid chain; its full sequence is Light-independent protochlorophyllide reductase subunit N (476 aa).

[4Fe-4S] cluster is bound by residues Cys31, Cys56, and Cys116.

Belongs to the BchN/ChlN family. As to quaternary structure, protochlorophyllide reductase is composed of three subunits; ChlL, ChlN and ChlB. Forms a heterotetramer of two ChlB and two ChlN subunits. [4Fe-4S] cluster serves as cofactor.

The protein resides in the plastid. It localises to the chloroplast. It carries out the reaction chlorophyllide a + oxidized 2[4Fe-4S]-[ferredoxin] + 2 ADP + 2 phosphate = protochlorophyllide a + reduced 2[4Fe-4S]-[ferredoxin] + 2 ATP + 2 H2O. Its pathway is porphyrin-containing compound metabolism; chlorophyll biosynthesis (light-independent). Component of the dark-operative protochlorophyllide reductase (DPOR) that uses Mg-ATP and reduced ferredoxin to reduce ring D of protochlorophyllide (Pchlide) to form chlorophyllide a (Chlide). This reaction is light-independent. The NB-protein (ChlN-ChlB) is the catalytic component of the complex. The polypeptide is Light-independent protochlorophyllide reductase subunit N (Staurastrum punctulatum (Green alga)).